The chain runs to 204 residues: Urease accessory protein UreG (204 aa).

Residue 12–19 coordinates GTP; the sequence is GPVGSGKT.

This sequence belongs to the SIMIBI class G3E GTPase family. UreG subfamily. As to quaternary structure, homodimer. UreD, UreF and UreG form a complex that acts as a GTP-hydrolysis-dependent molecular chaperone, activating the urease apoprotein by helping to assemble the nickel containing metallocenter of UreC. The UreE protein probably delivers the nickel.

The protein resides in the cytoplasm. Facilitates the functional incorporation of the urease nickel metallocenter. This process requires GTP hydrolysis, probably effectuated by UreG. The chain is Urease accessory protein UreG from Pseudomonas fluorescens (strain Pf0-1).